A 397-amino-acid chain; its full sequence is Staphyloferrin A transporter (397 aa).

Helical transmembrane passes span 10 to 30 (FLLF…VLTT), 39 to 59 (IVNF…GAIA), 67 to 87 (LLRI…VLTY), 93 to 110 (PISV…LSAV), 137 to 157 (FIIN…LAVY), 162 to 182 (TFLA…PLHF), 213 to 233 (IFIT…LLPV), 245 to 265 (IFGI…LVLP), 271 to 292 (IGMV…LGVV), 296 to 313 (IVIM…SQWA), 333 to 353 (VLSI…LMSI), and 358 to 378 (FGIV…TMVF).

The protein belongs to the major facilitator superfamily.

Its subcellular location is the cell membrane. Functionally, involved in staphyloferrin A secretion. This is Staphyloferrin A transporter from Staphylococcus aureus (strain NCTC 8325 / PS 47).